Reading from the N-terminus, the 96-residue chain is MIEMEFGKELLVYMTFLVVVTPVFVQAIKKTELVPSKWLPTVSILIGAILGALATFLDGSGSLATMIWAGALAGAGGTGLFEQFTNRSKKYGEDDK.

The Periplasmic portion of the chain corresponds to 1-4; it reads MIEM. 2 consecutive stretches face the cytoplasmic side: residues 1-32 and 26-29; these read MIEM…KKTE and QAIK. A helical transmembrane segment spans residues 5–25; that stretch reads EFGKELLVYMTFLVVVTPVFV. A helical transmembrane segment spans residues 33–55; it reads LVPSKWLPTVSILIGAILGALAT. Over 56-60 the chain is Periplasmic; the sequence is FLDGS. Residues 61–81 form a helical membrane-spanning segment; that stretch reads GSLATMIWAGALAGAGGTGLF. The Cytoplasmic portion of the chain corresponds to 82-96; the sequence is EQFTNRSKKYGEDDK.

As to quaternary structure, homomultimer. Interacts with isoform Antiholin; this interaction blocks the holin homomultimerization and delays host cell lysis.

The protein localises to the host cell inner membrane. Accumulates harmlessly in the cytoplasmic membrane until it reaches a critical concentration that triggers the formation of micron-scale pores (holes) causing host cell membrane disruption and endolysin escape into the periplasmic space. Determines the precise timing of host cell lysis. Participates with the endolysin and spanin proteins in the sequential events which lead to the programmed host cell lysis releasing the mature viral particles from the host cell. Its function is as follows. Isoform Antiholin: Counteracts the aggregation of the holin molecules and thus of pore formation. This is Putative antiholin (hol) from Listeria monocytogenes (Bacteriophage A118).